We begin with the raw amino-acid sequence, 173 residues long: Large ribosomal subunit protein uL10 (173 aa).

This sequence belongs to the universal ribosomal protein uL10 family. In terms of assembly, part of the ribosomal stalk of the 50S ribosomal subunit. The N-terminus interacts with L11 and the large rRNA to form the base of the stalk. The C-terminus forms an elongated spine to which L12 dimers bind in a sequential fashion forming a multimeric L10(L12)X complex.

Its function is as follows. Forms part of the ribosomal stalk, playing a central role in the interaction of the ribosome with GTP-bound translation factors. The polypeptide is Large ribosomal subunit protein uL10 (Myxococcus xanthus (strain DK1622)).